A 110-amino-acid chain; its full sequence is uncharacterized protein (110 aa).

The helical transmembrane segment at 18–34 (MFPLISTFTSIGLGVLM) threads the bilayer.

The protein resides in the membrane. This is an uncharacterized protein from Saccharomyces cerevisiae (strain ATCC 204508 / S288c) (Baker's yeast).